A 601-amino-acid polypeptide reads, in one-letter code: Peptide transporter PTR2 (601 aa).

Residues 1-10 (MLNHPSQGSD) show a composition bias toward polar residues. Residues 1-66 (MLNHPSQGSD…DEDFEGPTEE (66 aa)) are disordered. Residues 1 to 150 (MLNHPSQGSD…PVFGGYVADT (150 aa)) are Extracellular-facing. Residues 14–28 (DEKQGDFPVIEEEKT) are compositionally biased toward basic and acidic residues. The residue at position 37 (Tyr-37) is a Phosphotyrosine. 2 positions are modified to phosphoserine: Ser-39 and Ser-45. Over residues 42–53 (VANSTERYNLSP) the composition is skewed to polar residues. The segment covering 55 to 66 (PEDEDFEGPTEE) has biased composition (acidic residues). The helical transmembrane segment at 151-172 (FWGKYNTICCGTAIYIAGIFIL) threads the bilayer. The Cytoplasmic segment spans residues 173–182 (FITSIPSVGN). A helical transmembrane segment spans residues 183 to 202 (RDSAIGGFIAAIILIGIATG). Topologically, residues 203–210 (MIKANLSV) are extracellular. A helical membrane pass occupies residues 211–229 (LIADQLPKRKPSIKVLKSG). Topologically, residues 230-267 (ERVIVDSNITLQNVFMFFYFMINVGSLSLMATTELEYH) are cytoplasmic. A helical transmembrane segment spans residues 268–287 (KGFWAAYLLPFCFFWIAVVT). Topologically, residues 288 to 294 (LIFGKKQ) are extracellular. The chain crosses the membrane as a helical span at residues 295-316 (YIQRPIGDKVIAKSFKVCWILT). Over 317-378 (KNKFDFNAAK…ISSFITQASM (62 aa)) the chain is Cytoplasmic. The chain crosses the membrane as a helical span at residues 379–399 (MELHGIPNDFLQAFDSIALII). The Extracellular segment spans residues 400–412 (FIPIFEKFVYPFI). A helical membrane pass occupies residues 413–429 (RRYTPLKPITKIFFGFM). Topologically, residues 430–448 (FGSFAMTWAAVLQSFVYKA) are cytoplasmic. The chain crosses the membrane as a helical span at residues 449–466 (GPWYNEPLGHNTPNHVHV). Over 467–494 (CWQIPAYVLISFSEIFASITGLEYAYSK) the chain is Extracellular. Residues 495-513 (APASMKSFIMSIFLLTNAF) form a helical membrane-spanning segment. Over 514–526 (GSAIGCALSPVTV) the chain is Cytoplasmic. A helical transmembrane segment spans residues 527–547 (DPKFTWLFTGLAVACFISGCL). Topologically, residues 548 to 554 (FWLCFRK) are extracellular. A helical membrane pass occupies residues 555-577 (YNDTEEEMNAMDYEEEDEFDLNP). Residues 578 to 601 (ISAPKANDIEILEPMESLRSTTKY) lie on the Cytoplasmic side of the membrane. Ser-594 is modified (phosphoserine).

It belongs to the major facilitator superfamily. Proton-dependent oligopeptide transporter (POT/PTR) (TC 2.A.17) family.

It localises to the membrane. Its function is as follows. Uptake of small peptides. In Saccharomyces cerevisiae (strain ATCC 204508 / S288c) (Baker's yeast), this protein is Peptide transporter PTR2 (PTR2).